We begin with the raw amino-acid sequence, 344 residues long: MIELQGLSQRFPGGSGEVHALRDVSLSIASGEIFGIIGRSGAGKSTLVRAINLLNRPTSGRVIVAGQDLTALDKGALREARREIGMIFQHFNLLSSRTVYDNVALPLELAGKSKQEIASTVEPLLELVGLSKLRDRYPAQISGGQKQRVGIARALASKPKVLLSDEATSALDPETTRAILDLLKQINRELGLTIVMITHQMEVIKQVCDRVAVLEAGQVVESGRVIDVFLRPQHEVTRAMIGDVIAQELPVSVLKRVESRLGNGRDHVYRLAFTGENVDQPVLAQAIRQHGLDFNILHGHIDEIQGQAFGSLAIMATGELADVRAAMDYLQSQGVVVEEIEHVV.

The ABC transporter domain occupies 2-241 (IELQGLSQRF…PQHEVTRAMI (240 aa)). Position 38 to 45 (38 to 45 (GRSGAGKS)) interacts with ATP.

The protein belongs to the ABC transporter superfamily. Methionine importer (TC 3.A.1.24) family. In terms of assembly, the complex is composed of two ATP-binding proteins (MetN), two transmembrane proteins (MetI) and a solute-binding protein (MetQ).

The protein localises to the cell inner membrane. It carries out the reaction L-methionine(out) + ATP + H2O = L-methionine(in) + ADP + phosphate + H(+). The enzyme catalyses D-methionine(out) + ATP + H2O = D-methionine(in) + ADP + phosphate + H(+). Functionally, part of the ABC transporter complex MetNIQ involved in methionine import. Responsible for energy coupling to the transport system. This chain is Methionine import ATP-binding protein MetN, found in Cupriavidus metallidurans (strain ATCC 43123 / DSM 2839 / NBRC 102507 / CH34) (Ralstonia metallidurans).